The following is a 464-amino-acid chain: ATP-dependent protease ATPase subunit HslU (464 aa).

ATP contacts are provided by residues Val-19, 61–66 (GVGKTE), Asp-278, Glu-342, and Arg-414.

It belongs to the ClpX chaperone family. HslU subfamily. A double ring-shaped homohexamer of HslV is capped on each side by a ring-shaped HslU homohexamer. The assembly of the HslU/HslV complex is dependent on binding of ATP.

It is found in the cytoplasm. Its function is as follows. ATPase subunit of a proteasome-like degradation complex; this subunit has chaperone activity. The binding of ATP and its subsequent hydrolysis by HslU are essential for unfolding of protein substrates subsequently hydrolyzed by HslV. HslU recognizes the N-terminal part of its protein substrates and unfolds these before they are guided to HslV for hydrolysis. The sequence is that of ATP-dependent protease ATPase subunit HslU from Halalkalibacterium halodurans (strain ATCC BAA-125 / DSM 18197 / FERM 7344 / JCM 9153 / C-125) (Bacillus halodurans).